A 502-amino-acid polypeptide reads, in one-letter code: Hexokinase-2 (502 aa).

Residues 4–24 form a helical membrane-spanning segment; sequence VAVATTVVCSVAVCAAAALIV. The 453-residue stretch at 35 to 487 folds into the Hexokinase domain; that stretch reads ARVIEILKAF…SGVGAALLAA (453 aa). The interval 90–228 is hexokinase small subdomain; that stretch reads SGDETGFFYA…GLDMLVAALV (139 aa). ADP-binding residues include glycine 104, threonine 105, and asparagine 106. D-glucose-binding residues include threonine 194, lysine 195, asparagine 229, and aspartate 230. A hexokinase large subdomain region spans residues 229-476; sequence NDTIGTLAGG…ESVEVILSND (248 aa). Threonine 253 provides a ligand contact to ADP. 3 residues coordinate D-glucose: asparagine 256, glutamate 284, and glutamate 315. Glycine 441 lines the ADP pocket.

Belongs to the hexokinase family. In terms of tissue distribution, highly expressed in siliques, at intermediate levels in roots and flowers, and at lower levels in stems, rosette and cauline leaves.

The protein localises to the mitochondrion outer membrane. It carries out the reaction a D-hexose + ATP = a D-hexose 6-phosphate + ADP + H(+). The catalysed reaction is D-fructose + ATP = D-fructose 6-phosphate + ADP + H(+). The enzyme catalyses D-glucose + ATP = D-glucose 6-phosphate + ADP + H(+). Its pathway is carbohydrate metabolism; hexose metabolism. It participates in carbohydrate degradation; glycolysis; D-glyceraldehyde 3-phosphate and glycerone phosphate from D-glucose: step 1/4. Functionally, fructose and glucose phosphorylating enzyme. May be involved in the phosphorylation of glucose during the export from mitochondrion to cytosol. Acts as a sugar sensor which may regulate sugar-dependent gene repression or activation. Mediates the effects of sugar on plant growth and development independently of its catalytic activity or the sugar metabolism. May regulate the execution of program cell death in plant cells. This Arabidopsis thaliana (Mouse-ear cress) protein is Hexokinase-2 (HXK2).